Consider the following 310-residue polypeptide: Nucleotide-binding protein Mmc1_3333 (310 aa).

An ATP-binding site is contributed by 19 to 26 (GLSGAGKS).

It belongs to the RapZ-like family.

Displays ATPase and GTPase activities. The chain is Nucleotide-binding protein Mmc1_3333 from Magnetococcus marinus (strain ATCC BAA-1437 / JCM 17883 / MC-1).